Reading from the N-terminus, the 508-residue chain is RanBP-type and C3HC4-type zinc finger-containing protein 1 (508 aa).

At M1 the chain carries N-acetylmethionine. The tract at residues 1–218 (MDEKTKKAEE…PGCEMCCRAR (218 aa)) is interaction with IRF3. Positions 1-268 (MDEKTKKAEE…NYLQHVQLEQ (268 aa)) are interaction with TAB2. S50 carries the post-translational modification Phosphoserine. In terms of domain architecture, Ubiquitin-like spans 55 to 119 (IRLCVSVEDA…DQETLHSHGI (65 aa)). An interaction with RNF31 region spans residues 69 to 131 (VTIWLTVRPD…NGDGAYLYLL (63 aa)). The disordered stretch occupies residues 163 to 191 (QSRGPLEPVLPKPRTNQEPGQPDAAPESP). The RanBP2-type zinc-finger motif lies at 188-220 (PESPPVGWQCPGCTFINKPTRPGCEMCCRARPE). A coiled-coil region spans residues 231–259 (DEEERARLAGEEEALRQYQQRKQQQQEGN). Residues 276–504 (EPTECPVCYS…VNGIPCHPSC (229 aa)) form a TRIAD supradomain region. Positions 280, 283, 298, 300, 303, 306, and 321 each coordinate Zn(2+). The RING-type 1 zinc-finger motif lies at 280–330 (CPVCYSVLAPGEAVVLRECLHTFCRECLQGTIRNSQEAEVACPFIDSTYSC). Residue Y328 is modified to Phosphotyrosine. Positions 330, 369, 374, 389, 392, 397, 400, 404, 409, 445, and 448 each coordinate Zn(2+). The IBR-type zinc-finger motif lies at 349–409 (QRFLDLGVSI…CKAIHEHMNC (61 aa)). The RING-type 2; atypical zinc finger occupies 445–474 (CPQCRIVVQKKDGCDWIRCTVCHTEICWVT). Residue C458 is part of the active site. Residues C463 and C466 each coordinate Zn(2+).

Belongs to the RBR family. In terms of assembly, component of the LUBAC complex (linear ubiquitin chain assembly complex) which consists of SHARPIN, RBCK1 and RNF31. LUBAC has a MW of approximately 600 kDa suggesting a heteromultimeric assembly of its subunits. Interacts with beta-I-type (PRKCB1) and zeta-type protein kinase C (PRKCZ). Interacts with UBE2L3. Interacts with IREB2 only in iron-rich conditions. Associates with the TNF-R1 signaling complex (TNF-RSC) in a stimulation-dependent manner. Interacts with EYA1, TAB2, TAB3, MAP3K7 TRAF6 and RIPK1. Interacts with IRF3. Auto-ubiquitinated. Auto-ubiquitination leads to degradation by the proteasome. Post-translationally, phosphorylated. In vitro, phosphorylation inhibits auto-ubiquitination activity.

The enzyme catalyses [E2 ubiquitin-conjugating enzyme]-S-ubiquitinyl-L-cysteine + [acceptor protein]-L-lysine = [E2 ubiquitin-conjugating enzyme]-L-cysteine + [acceptor protein]-N(6)-ubiquitinyl-L-lysine.. It functions in the pathway protein modification; protein ubiquitination. E3 ubiquitin-protein ligase, which accepts ubiquitin from specific E2 ubiquitin-conjugating enzymes, such as UBE2L3/UBCM4, and then transfers it to substrates. Functions as an E3 ligase for oxidized IREB2 and both heme and oxygen are necessary for IREB2 ubiquitination. Promotes ubiquitination of TAB2 and IRF3 and their degradation by the proteasome. Component of the LUBAC complex which conjugates linear ('Met-1'-linked) polyubiquitin chains to substrates and plays a key role in NF-kappa-B activation and regulation of inflammation. LUBAC conjugates linear polyubiquitin to IKBKG and RIPK1 and is involved in activation of the canonical NF-kappa-B and the JNK signaling pathways. Linear ubiquitination mediated by the LUBAC complex interferes with TNF-induced cell death and thereby prevents inflammation. LUBAC is recruited to the TNF-R1 signaling complex (TNF-RSC) following polyubiquitination of TNF-RSC components by BIRC2 and/or BIRC3 and to conjugate linear polyubiquitin to IKBKG and possibly other components contributing to the stability of the complex. The LUBAC complex is also involved in innate immunity by conjugating linear polyubiquitin chains at the surface of bacteria invading the cytosol to form the ubiquitin coat surrounding bacteria. LUBAC is not able to initiate formation of the bacterial ubiquitin coat, and can only promote formation of linear polyubiquitins on pre-existing ubiquitin. The bacterial ubiquitin coat acts as an 'eat-me' signal for xenophagy and promotes NF-kappa-B activation. Together with OTULIN, the LUBAC complex regulates the canonical Wnt signaling during angiogenesis. Binds polyubiquitin of different linkage types. This chain is RanBP-type and C3HC4-type zinc finger-containing protein 1 (Rbck1), found in Mus musculus (Mouse).